We begin with the raw amino-acid sequence, 351 residues long: Probable protein phosphatase 2C 8 (351 aa).

A disordered region spans residues 1–63 (MLEKESDLTA…REAEEDKPSF (63 aa)). Residues 54–63 (REAEEDKPSF) are compositionally biased toward basic and acidic residues. A PPM-type phosphatase domain is found at 74–348 (EADVAEDKGA…DNCTAIVIVF (275 aa)). Residues Asp-114, Gly-115, Asp-295, and Asp-339 each coordinate Mn(2+).

Belongs to the PP2C family. It depends on Mg(2+) as a cofactor. Mn(2+) serves as cofactor.

The enzyme catalyses O-phospho-L-seryl-[protein] + H2O = L-seryl-[protein] + phosphate. It catalyses the reaction O-phospho-L-threonyl-[protein] + H2O = L-threonyl-[protein] + phosphate. The sequence is that of Probable protein phosphatase 2C 8 from Arabidopsis thaliana (Mouse-ear cress).